The following is a 109-amino-acid chain: MCNLLVAEQCCRICELRNGWYTENYTESVPTTLANNAFYGSVENGKISSALRAELAEAAADYAVALVQVGLGEGFAGLIAQWDMDTSNGALTCCLKRVWYLVIKNLHLS.

To E.coli YtfG C-terminal region.

This is an uncharacterized protein from Haemophilus influenzae (strain ATCC 51907 / DSM 11121 / KW20 / Rd).